Here is a 418-residue protein sequence, read N- to C-terminus: Equilibrative nucleotide transporter 6 (418 aa).

11 helical membrane passes run 19–39 (AMIV…SMLT), 56–76 (VLTL…AYHE), 86–106 (LIGY…DLAT), 112–132 (FGPY…DATV), 142–162 (LMCP…GALT), 186–206 (MFLA…AYVL), 264–284 (HAVN…GFLY), 291–311 (GLGA…DLVG), 326–346 (KLIT…YFTA), 353–373 (WMIM…VCIM), and 392–412 (LVIF…LWLI).

This sequence belongs to the SLC29A/ENT transporter (TC 2.A.57) family. In terms of tissue distribution, expressed in leaves and siliques.

The protein localises to the cell membrane. Functionally, nucleoside transporter that can mediate uptake of adenosine, uridine, guanosine or cytidine when expressed in a heterologous system (yeast). This chain is Equilibrative nucleotide transporter 6 (ENT6), found in Arabidopsis thaliana (Mouse-ear cress).